Here is a 282-residue protein sequence, read N- to C-terminus: Acyl-CoA-binding domain-containing protein 6 (282 aa).

The segment at 1–34 (MATPFLPAGATTGDSGGELSSGDDSGDLESFQTP) is disordered. Ser41 is subject to Phosphoserine. One can recognise an ACB domain in the interval 42–127 (LAELFEKAAA…VKKLDPGWNP (86 aa)). Residues 69 to 73 (YARYK) and Lys95 each bind an acyl-CoA. Phosphoserine is present on Ser106. Tyr114 is a binding site for an acyl-CoA. ANK repeat units follow at residues 191–220 (EGRALLHWACDRGHKELVKVLLQCEAGINC) and 224–253 (EGQTALHYAAACEFSDIVELLLQSGADPTL).

As to quaternary structure, monomer.

Its subcellular location is the cytoplasm. It localises to the nucleus. Its function is as follows. Binds long-chain acyl-coenzyme A molecules with a strong preference for unsaturated C18:1-CoA, lower affinity for unsaturated C20:4-CoA, and very weak affinity for saturated C16:0-CoA. Does not bind fatty acids. Plays a role in protein N-myristoylation. The protein is Acyl-CoA-binding domain-containing protein 6 (Acbd6) of Rattus norvegicus (Rat).